The sequence spans 175 residues: Adenylate kinase isoenzyme 6 homolog (175 aa).

Residues glycine 17, glycine 19, lysine 20, threonine 21, and serine 22 each contribute to the ATP site. The interval 37–60 is NMPbind; that stretch reads DISSAVKEKELHDGWDSEFQCYIL. Residues 112–122 form an LID region; sequence KRNYNQHKITN. Residue arginine 113 participates in ATP binding.

It belongs to the adenylate kinase family. AK6 subfamily. Monomer and homodimer. Interacts with small ribosomal subunit protein uS11. Not a structural component of 43S pre-ribosomes, but transiently interacts with them by binding to uS11.

It is found in the cytoplasm. It localises to the nucleus. It catalyses the reaction AMP + ATP = 2 ADP. The enzyme catalyses ATP + H2O = ADP + phosphate + H(+). Broad-specificity nucleoside monophosphate (NMP) kinase that catalyzes the reversible transfer of the terminal phosphate group between nucleoside triphosphates and monophosphates. Also has ATPase activity. Involved in the late cytoplasmic maturation steps of the 40S ribosomal particles, specifically 18S rRNA maturation. While NMP activity is not required for ribosome maturation, ATPase activity is. Associates transiently with small ribosomal subunit protein uS11. ATP hydrolysis breaks the interaction with uS11. May temporarily remove uS11 from the ribosome to enable a conformational change of the ribosomal RNA that is needed for the final maturation step of the small ribosomal subunit. Its NMP activity may have a role in nuclear energy homeostasis. This is Adenylate kinase isoenzyme 6 homolog from Dictyostelium discoideum (Social amoeba).